A 525-amino-acid chain; its full sequence is D-arabinono-1,4-lactone oxidase (525 aa).

The 175-residue stretch at 23–197 folds into the FAD-binding PCMH-type domain; the sequence is YSCRPQLYFQ…VKATIRVIPE (175 aa). His-60 carries the post-translational modification Pros-8alpha-FAD histidine.

It belongs to the oxygen-dependent FAD-linked oxidoreductase family. FAD serves as cofactor.

The protein resides in the mitochondrion membrane. It carries out the reaction D-arabinono-1,4-lactone + O2 = dehydro-D-arabinono-1,4-lactone + H2O2 + H(+). It participates in cofactor biosynthesis; D-erythroascorbate biosynthesis; dehydro-D-arabinono-1,4-lactone from D-arabinose: step 2/2. This is D-arabinono-1,4-lactone oxidase (ALO1) from Kluyveromyces lactis (strain ATCC 8585 / CBS 2359 / DSM 70799 / NBRC 1267 / NRRL Y-1140 / WM37) (Yeast).